The following is a 92-amino-acid chain: Small ribosomal subunit protein uS15c (92 aa).

This sequence belongs to the universal ribosomal protein uS15 family. Part of the 30S ribosomal subunit.

It localises to the plastid. Its subcellular location is the chloroplast. This chain is Small ribosomal subunit protein uS15c (rps15), found in Guizotia abyssinica (Niger).